Consider the following 508-residue polypeptide: UDP-N-acetylmuramoyl-L-alanyl-D-glutamate--L-lysine ligase (508 aa).

Position 47 (Ser47) interacts with UDP-N-acetyl-alpha-D-muramoyl-L-alanyl-D-glutamate. Residue 124 to 130 coordinates ATP; that stretch reads GTKGKTT. UDP-N-acetyl-alpha-D-muramoyl-L-alanyl-D-glutamate contacts are provided by residues 168-169, Ser195, and Arg203; that span reads TT. Lys237 carries the N6-carboxylysine modification. The L-lysine recognition motif signature appears at 425–428; sequence DDPA.

Belongs to the MurCDEF family. MurE subfamily. Post-translationally, carboxylation is probably crucial for Mg(2+) binding and, consequently, for the gamma-phosphate positioning of ATP.

Its subcellular location is the cytoplasm. The catalysed reaction is UDP-N-acetyl-alpha-D-muramoyl-L-alanyl-D-glutamate + L-lysine + ATP = UDP-N-acetyl-alpha-D-muramoyl-L-alanyl-gamma-D-glutamyl-L-lysine + ADP + phosphate + H(+). The protein operates within cell wall biogenesis; peptidoglycan biosynthesis. In terms of biological role, catalyzes the addition of L-lysine to the nucleotide precursor UDP-N-acetylmuramoyl-L-alanyl-D-glutamate (UMAG) in the biosynthesis of bacterial cell-wall peptidoglycan. The sequence is that of UDP-N-acetylmuramoyl-L-alanyl-D-glutamate--L-lysine ligase from Enterococcus faecalis (strain ATCC 700802 / V583).